The following is a 367-amino-acid chain: Heme A synthase (367 aa).

Helical transmembrane passes span 12–32, 99–119, 127–147, 163–183, and 198–218; these read GAVR…VAVG, LLGR…WWQG, LGLL…WIMV, LALH…LAAG, and ATAL…GLVA. Position 264 (histidine 264) interacts with heme. A run of 3 helical transmembrane segments spans residues 266–286, 296–316, and 317–337; these read VTAY…RLTG, GVVI…LLAV, and PLWA…MATV. Position 324 (histidine 324) interacts with heme.

It belongs to the COX15/CtaA family. Type 2 subfamily. In terms of assembly, interacts with CtaB. The cofactor is heme b.

It is found in the cell membrane. The catalysed reaction is Fe(II)-heme o + 2 A + H2O = Fe(II)-heme a + 2 AH2. It functions in the pathway porphyrin-containing compound metabolism; heme A biosynthesis; heme A from heme O: step 1/1. Catalyzes the conversion of heme O to heme A by two successive hydroxylations of the methyl group at C8. The first hydroxylation forms heme I, the second hydroxylation results in an unstable dihydroxymethyl group, which spontaneously dehydrates, resulting in the formyl group of heme A. This chain is Heme A synthase, found in Methylobacterium radiotolerans (strain ATCC 27329 / DSM 1819 / JCM 2831 / NBRC 15690 / NCIMB 10815 / 0-1).